Reading from the N-terminus, the 265-residue chain is Putative carbamate hydrolase RutD (265 aa).

Positions 21-123 (PILLSAGMGG…TIVNGWARAD (103 aa)) constitute an AB hydrolase-1 domain.

The protein belongs to the AB hydrolase superfamily. Hydrolase RutD family.

It carries out the reaction carbamate + 2 H(+) = NH4(+) + CO2. Its function is as follows. Involved in pyrimidine catabolism. May facilitate the hydrolysis of carbamate, a reaction that can also occur spontaneously. The protein is Putative carbamate hydrolase RutD of Azorhizobium caulinodans (strain ATCC 43989 / DSM 5975 / JCM 20966 / LMG 6465 / NBRC 14845 / NCIMB 13405 / ORS 571).